A 281-amino-acid polypeptide reads, in one-letter code: Probable endonuclease 4 (281 aa).

Zn(2+) is bound by residues H69, H109, E145, D179, H182, H216, D229, H231, and E261.

This sequence belongs to the AP endonuclease 2 family. The cofactor is Zn(2+).

It catalyses the reaction Endonucleolytic cleavage to 5'-phosphooligonucleotide end-products.. In terms of biological role, endonuclease IV plays a role in DNA repair. It cleaves phosphodiester bonds at apurinic or apyrimidinic (AP) sites, generating a 3'-hydroxyl group and a 5'-terminal sugar phosphate. This Aeromonas salmonicida (strain A449) protein is Probable endonuclease 4.